The following is a 340-amino-acid chain: Large ribosomal subunit protein uL10 (340 aa).

Residues 305–340 are disordered; that stretch reads APQPAEEKVEEAEEEEEEEEEASEEEALAGLGALFG. Positions 312–331 are enriched in acidic residues; sequence KVEEAEEEEEEEEEASEEEA.

Belongs to the universal ribosomal protein uL10 family. Part of the 50S ribosomal subunit. Forms part of the ribosomal stalk which helps the ribosome interact with GTP-bound translation factors. Forms a heptameric L10(L12)2(L12)2(L12)2 complex, where L10 forms an elongated spine to which the L12 dimers bind in a sequential fashion.

Functionally, forms part of the ribosomal stalk, playing a central role in the interaction of the ribosome with GTP-bound translation factors. In Thermococcus gammatolerans (strain DSM 15229 / JCM 11827 / EJ3), this protein is Large ribosomal subunit protein uL10.